Here is a 272-residue protein sequence, read N- to C-terminus: MKFSKMHGNGNDFIVIEDLNNEYLGKEGEIAQKMCHRRFGIGADGILIVRKNENCDIEMVIINSDGSYAAMCGNGIRCFAKYVYEKGIVKKDVLDVLTGDGVKRIFLEIENDKVKTINVNMGFGDFKPKNIPALCDEEIIEKKVSVGNGNFEITSLLMGVPHTIIFEEEKYPIECGRDIEKYELFPQGTNVNFCKVIDRNTMEVRTWERGAGPTLACGTGNCASVIAANKLGLVDKEVKVIVPGGELKVNIEDDGVKMIGNASFICDGTYLF.

Substrate is bound by residues Asn-11 and Asn-63. Cys-72 functions as the Proton donor in the catalytic mechanism. Substrate is bound by residues 73-74 (GN), Asn-190, and 208-209 (ER). Cys-217 serves as the catalytic Proton acceptor. Position 218-219 (218-219 (GT)) interacts with substrate.

This sequence belongs to the diaminopimelate epimerase family. Homodimer.

It localises to the cytoplasm. The enzyme catalyses (2S,6S)-2,6-diaminopimelate = meso-2,6-diaminopimelate. It participates in amino-acid biosynthesis; L-lysine biosynthesis via DAP pathway; DL-2,6-diaminopimelate from LL-2,6-diaminopimelate: step 1/1. Functionally, catalyzes the stereoinversion of LL-2,6-diaminopimelate (L,L-DAP) to meso-diaminopimelate (meso-DAP), a precursor of L-lysine and an essential component of the bacterial peptidoglycan. The polypeptide is Diaminopimelate epimerase (Clostridium perfringens (strain 13 / Type A)).